The following is an 865-amino-acid chain: Prominin-1 (865 aa).

Residues 1 to 19 (MALVLGSLLLLGLCGNSFS) form the signal peptide. Residues 20-108 (GGQPSSTDAP…GLKIVYYEAG (89 aa)) lie on the Extracellular side of the membrane. A helical membrane pass occupies residues 109 to 129 (IILCCVLGLLFIILMPLVGYF). The Cytoplasmic segment spans residues 130–157 (FCMCRCCNKCGGEMHQRQKENGPFLRKC). A helical transmembrane segment spans residues 158–178 (FAISLLVICIIISIGIFYGFV). Topologically, residues 179–433 (ANHQVRTRIK…LPTLEEYDSY (255 aa)) are extracellular. Asn-220 is a glycosylation site (N-linked (GlcNAc...) asparagine). An N6-acetyllysine mark is found at Lys-225, Lys-257, and Lys-264. Asn-274, Asn-395, and Asn-414 each carry an N-linked (GlcNAc...) asparagine glycan. Residues 434 to 454 (WWLGGLVICSLLTLIVIFYYL) form a helical membrane-spanning segment. At 455-486 (GLLCGVCGYDRHATPTTRGCVSNTGGVFLMVG) the chain is on the cytoplasmic side. A helical transmembrane segment spans residues 487–507 (VGLSFLFCWILMIIVVLTFVF). Residues 508-792 (GANVEKLICE…LCSYIIDPLN (285 aa)) are Extracellular-facing. N-linked (GlcNAc...) asparagine glycans are attached at residues Asn-548, Asn-580, Asn-729, and Asn-730. The chain crosses the membrane as a helical span at residues 793–813 (LFWFGIGKATVFLLPALIFAV). Residues 814–865 (KLAKYYRRMDSEDVYDDVETIPMKNMENGNNGYHKDHVYGIHNPVMTSPSQH) are Cytoplasmic-facing. A Phosphoserine modification is found at Ser-863.

This sequence belongs to the prominin family. In terms of assembly, interacts with CDHR1 and with actin filaments. Interacts with NAT8 and NAT8B. Post-translationally, isoform 1 and isoform 2 are glycosylated. In terms of processing, acetylation at Lys-225, Lys-257 and Lys-264 by NAT8 and NAT8B may control PROM1 protein expression and its function in cell apoptosis. As to expression, isoform 1 is selectively expressed on CD34 hematopoietic stem and progenitor cells in adult and fetal bone marrow, fetal liver, cord blood and adult peripheral blood. Isoform 1 is not detected on other blood cells. Isoform 1 is also expressed in a number of non-lymphoid tissues including retina, pancreas, placenta, kidney, liver, lung, brain and heart. Found in saliva within small membrane particles. Isoform 2 is predominantly expressed in fetal liver, skeletal muscle, kidney, and heart as well as adult pancreas, kidney, liver, lung, and placenta. Isoform 2 is highly expressed in fetal liver, low in bone marrow, and barely detectable in peripheral blood. Isoform 2 is expressed on hematopoietic stem cells and in epidermal basal cells (at protein level). Expressed in adult retina by rod and cone photoreceptor cells (at protein level).

It is found in the apical cell membrane. The protein resides in the cell projection. The protein localises to the microvillus membrane. Its subcellular location is the cilium. It localises to the photoreceptor outer segment. It is found in the endoplasmic reticulum. The protein resides in the endoplasmic reticulum-Golgi intermediate compartment. Its function is as follows. May play a role in cell differentiation, proliferation and apoptosis. Binds cholesterol in cholesterol-containing plasma membrane microdomains and may play a role in the organization of the apical plasma membrane in epithelial cells. During early retinal development acts as a key regulator of disk morphogenesis. Involved in regulation of MAPK and Akt signaling pathways. In neuroblastoma cells suppresses cell differentiation such as neurite outgrowth in a RET-dependent manner. The protein is Prominin-1 (PROM1) of Homo sapiens (Human).